A 102-amino-acid chain; its full sequence is MNGQNIRIRLKAFDHRILDASTKEIVSTARRTGAQIRGPIPLPTHIEKFTVNRSPHIDKKSREQFEMRTHKRVLDIVDPTPQTVDALMKLDLAAGVDVEIKL.

Belongs to the universal ribosomal protein uS10 family. As to quaternary structure, part of the 30S ribosomal subunit.

Its function is as follows. Involved in the binding of tRNA to the ribosomes. The protein is Small ribosomal subunit protein uS10 of Methylorubrum populi (strain ATCC BAA-705 / NCIMB 13946 / BJ001) (Methylobacterium populi).